A 174-amino-acid polypeptide reads, in one-letter code: uncharacterized protein (174 aa).

The helical transmembrane segment at L7–L24 threads the bilayer.

Its subcellular location is the membrane. This is an uncharacterized protein from Methanocaldococcus jannaschii (strain ATCC 43067 / DSM 2661 / JAL-1 / JCM 10045 / NBRC 100440) (Methanococcus jannaschii).